The following is a 421-amino-acid chain: Gamma-glutamyl phosphate reductase (421 aa).

The protein belongs to the gamma-glutamyl phosphate reductase family.

The protein resides in the cytoplasm. It catalyses the reaction L-glutamate 5-semialdehyde + phosphate + NADP(+) = L-glutamyl 5-phosphate + NADPH + H(+). It functions in the pathway amino-acid biosynthesis; L-proline biosynthesis; L-glutamate 5-semialdehyde from L-glutamate: step 2/2. Its function is as follows. Catalyzes the NADPH-dependent reduction of L-glutamate 5-phosphate into L-glutamate 5-semialdehyde and phosphate. The product spontaneously undergoes cyclization to form 1-pyrroline-5-carboxylate. In Brucella melitensis biotype 1 (strain ATCC 23456 / CCUG 17765 / NCTC 10094 / 16M), this protein is Gamma-glutamyl phosphate reductase.